Consider the following 913-residue polypeptide: MASESDTEEFYDAPEDVHLGGGYPVGSPGKVGLSTFKETENTAYKVGNESPVQELKQDVSKKIIESIIEESQKVLQLEDDSLDSKGKELSDQATASPIVARTDLSNIPGLLAIDQVLPEESQKAESQNTFEETELELKKCFPSDETCEKPVDETTKLTQTSSTEQLNVLETETEVLNKEAVEVKGGGDVLEPVSSDSLSTKDFAAVEEVAPAKPPRHLTPEPDIVASTKKPVPARPPPPTNFPPPRPPPPSRPAPPPRKRKSELEFETLKTPDIDVPKENITSDSLLTASMASESTVKDSQPSLDLASATSGDKIVTAQENGKAPDGQTVAGEVMGPQRPRSNSGRELTDEEILASVMIKNLDTGEEIPLSLAEEKLPTGINPLTLHIMRRTKEYVSNDAAQSDDEEKLQSQPTDTDGGRLKQKTTQLKKFLGKSVKRAKHLAEEYGERAINKVKSVRDEVFHTDQDDPSSSDDEGMPYTRPVKFKAAHGFKGPYDFDQIKVVQDLSGEHMGAVWTMKFSHCGRLLASAGQDNVVRIWALKNAFDYFNNMRMKYNTEGRVSPSPSQESLSSSKSDTDTGVCSGTDEDPDDKNAPFRQRPFCKYKGHTADLLDLSWSKNYFLLSSSMDKTVRLWHISRRECLCCFQHIDFVTAIAFHPRDDRYFLSGSLDGKLRLWNIPDKKVALWNEVDGQTKLITAANFCQNGKYAVIGTYDGRCIFYDTEHLKYHTQIHVRSTRGRNKVGRKITGIEPLPGENKILVTSNDSRIRLYDLRDLSLSMKYKGYVNSSSQIKASFSHDFTYLVSGSEDKYVYIWSTYHDLSKFTSVRRDRNDFWEGIKAHNAVVTSAIFAPNPSLMLSLDVQSEKSEGNEKSEDAEVLDATPSGIMKTDNTEVLLSADFTGAIKVFVNKRKNVS.

Residues 1-14 (MASESDTEEFYDAP) show a composition bias toward acidic residues. Residues 1 to 24 (MASESDTEEFYDAPEDVHLGGGYP) are disordered. Ala2 carries the N-acetylalanine modification. The tract at residues 2-170 (ASESDTEEFY…SSTEQLNVLE (169 aa)) is binding activity. Phosphoserine is present on Ser3. The FFAT-like motif motif lies at 9-15 (EFYDAPE). Tyr11 is modified (phosphotyrosine). Phosphoserine is present on residues Ser27, Ser50, Ser66, Ser71, Ser81, Ser96, and Ser126. A coiled-coil region spans residues 119–184 (EESQKAESQN…VLNKEAVEVK (66 aa)). A phosphothreonine mark is found at Thr158 and Thr219. The disordered stretch occupies residues 205–348 (AVEEVAPAKP…RPRSNSGREL (144 aa)). Positions 211-257 (PAKPPRHLTPEPDIVASTKKPVPARPPPPTNFPPPRPPPPSRPAPPP) are important for interaction with ARHGAP26 AND ARHGAP10. The segment covering 233–256 (PARPPPPTNFPPPRPPPPSRPAPP) has biased composition (pro residues). Ser262 carries the post-translational modification Phosphoserine. A compositionally biased stretch (basic and acidic residues) spans 262–278 (SELEFETLKTPDIDVPK). Thr271 is subject to Phosphothreonine. Residues 280-311 (NITSDSLLTASMASESTVKDSQPSLDLASATS) are compositionally biased toward polar residues. The important for interaction with RAB11A stretch occupies residues 334–347 (VMGPQRPRSNSGRE). Residues Ser342 and Ser344 each carry the phosphoserine; by PKB/AKT1 modification. Thr349 is subject to Phosphothreonine. Disordered regions lie at residues 397–424 (SNDA…LKQK) and 459–480 (DEVF…MPYT). Phosphoserine is present on residues Ser403, Ser470, Ser471, and Ser472. The segment covering 467–476 (DDPSSSDDEG) has biased composition (acidic residues). Tyr479 carries the phosphotyrosine modification. A WD 1 repeat occupies 509–548 (EHMGAVWTMKFSHCGRLLASAGQDNVVRIWALKNAFDYFN). The segment at 557-593 (EGRVSPSPSQESLSSSKSDTDTGVCSGTDEDPDDKNA) is disordered. Phosphoserine is present on residues Ser561 and Ser565. Positions 561 to 573 (SPSPSQESLSSSK) are enriched in low complexity. WD repeat units lie at residues 605–643 (GHTA…CLCC), 645–685 (QHID…VALW), 690–729 (GQTK…YHTQ), 740–779 (KVGR…LSMK), 784–823 (VNSS…SKFT), and 876–913 (VLDA…KNVS).

In terms of assembly, interacts with the GTP-bound form of RAB11A and RAB11B. Interacts with GRAF1/ARHGAP26 or GRAF2/ARHGAP10; the interaction connects the endoplasmic reticulum (ER) with the endosomal tubule. Interacts (via FFAT-like motif) with VAPA (via MSP domain) or VAPB (via MSP domain); the interaction connects the ER with the endosomal tubule. Does not bind to RAB7, RAB10, RAB14, RAB35 and RAB8A. In terms of processing, phosphorylated by ATK1; the phosphorylation stabilizes its interaction with RAB11A and RAB11B.

It is found in the cytoplasm. It localises to the cytosol. The protein localises to the perinuclear region. Its subcellular location is the endosome membrane. The protein resides in the golgi apparatus. It is found in the trans-Golgi network. Downstream effector for Rab11 which regulates Rab11 intracellular membrane trafficking functions such as endocytic recycling, intracellular ciliogenesis and protein export. ATK1-mediated phosphorylation of WDR44 induces binding to Rab11 which activates endocytic recycling of transferrin receptor back to the plasma membrane. When bound to Rab11, prevents the formation of the ciliogenic Rab11-Rabin8/RAB3IP-RAB11FIP3 complex, therefore inhibiting preciliary trafficking and ciliogenesis. Participates in neo-synthesized protein export by connecting the endoplasmic reticulum (ER) with the endosomal tubule via direct interactions with the integral ER proteins VAPA or VAPB and the endosomal protein GRAFs (GRAF1/ARHGAP26 or GRAF2/ARHGAP10), which facilitates the transfer of proteins such as E-cadherin, MPP14 and CFTR into a Rab8-Rab10-Rab11-dependent export route. In Homo sapiens (Human), this protein is WD repeat-containing protein 44.